The primary structure comprises 461 residues: MSVRIEHDTFGEIEVPADKYWGAQTERSKRNFPVGKERMPIEVVYGFAQLKRAAALANFDLGKLSEAKKDAIVYACDQILSGELDEHFPLVVWQTGSGTQSNMNVNEVVSYVANMYLKDHHSDESIHPNDDVNKSQSSNDTFPTAMHVALYQEVETKLEPALKLLRNTLKEKEDKFDSIIKIGRTHLQDATPIKLGQEISGWRYMLDRCETMLSESKKHILNLAIGGTAVGTGINAHPEFGDKVAQYISENTGYPFVSSENKFHALTAHDEVVQLHGTLKALAGDLMKIANDVRWLASGPRAGLAEISIPENEPGSSIMPGKVNPTQCEMLTMVAVQVMGNDTVVGFASSQGNFELNVYKPVIMHNTLQSIYLLADGMETFNNNCAVGIEPIEENIDNYLNQSLMLVTALNPHIGYEKAAQIAKKAHKEGLTLKESAIQTGYVTEEQFEAWIKPEDMVDPH.

Residues 97–99 (SGT), 127–130 (HPND), 137–139 (SSN), and threonine 185 contribute to the substrate site. Residue histidine 186 is the Proton donor/acceptor of the active site. Serine 316 is a catalytic residue. Residues serine 317 and 322–324 (KVN) contribute to the substrate site.

It belongs to the class-II fumarase/aspartase family. Fumarase subfamily. As to quaternary structure, homotetramer.

The protein resides in the cytoplasm. The catalysed reaction is (S)-malate = fumarate + H2O. It functions in the pathway carbohydrate metabolism; tricarboxylic acid cycle; (S)-malate from fumarate: step 1/1. Its function is as follows. Involved in the TCA cycle. Catalyzes the stereospecific interconversion of fumarate to L-malate. In Staphylococcus aureus (strain MRSA252), this protein is Fumarate hydratase class II.